The sequence spans 107 residues: Small ribosomal subunit protein uS10 (107 aa).

The protein belongs to the universal ribosomal protein uS10 family. Part of the 30S ribosomal subunit.

In terms of biological role, involved in the binding of tRNA to the ribosomes. This chain is Small ribosomal subunit protein uS10, found in Deinococcus deserti (strain DSM 17065 / CIP 109153 / LMG 22923 / VCD115).